The following is a 410-amino-acid chain: uncharacterized protein (410 aa).

The next 12 helical transmembrane spans lie at 27–47 (ILAL…VQSI), 63–83 (SLAL…TGPL), 97–117 (LFIA…ISIV), 118–138 (LLRA…MTYI), 145–165 (NSLS…GFLG), 180–200 (ISLM…LYFL), 228–248 (VLFF…TIFN), 254–274 (LMLE…TIYL), 293–313 (NNIL…TQYN), 316–332 (FIII…FFAS), 355–375 (YLFF…FFWF), and 378–398 (QWLG…FLSF).

It belongs to the major facilitator superfamily.

Its subcellular location is the cell membrane. This is an uncharacterized protein from Buchnera aphidicola subsp. Acyrthosiphon pisum (strain APS) (Acyrthosiphon pisum symbiotic bacterium).